The following is a 276-amino-acid chain: Small ribosomal subunit protein uS2 (276 aa).

The tract at residues 251–276 is disordered; that stretch reads AEEAPAAAEEAPAAEPAAEETPAAEA. The segment covering 252-276 has biased composition (low complexity); sequence EEAPAAAEEAPAAEPAAEETPAAEA.

The protein belongs to the universal ribosomal protein uS2 family.

The sequence is that of Small ribosomal subunit protein uS2 from Jannaschia sp. (strain CCS1).